Reading from the N-terminus, the 318-residue chain is MPKRGKKGAVAEDGDELRTEPEAKKSKTAAKKNDKEAAGEGPALYEDPPDQKTSPSGKPATLKICSWNVDGLRAWIKKKGLDWVKEEAPDILCLQETKCSENKLPAELQELPGLSHQYWSAPSDKEGYSGVGLLSRQCPLKVSYGIGEEEHDQEGRVIVAEFDSFVLVTAYVPNAGRGLVRLEYRQRWDEAFRKFLKGLASRKPLVLCGDLNVAHEEIDLRNPKGNKKNAGFTPQERQGFGELLQAVPLADSFRHLYPNTPYAYTFWTYMMNARSKNVGWRLDYFLLSHSLLPALCDSKIRSKALGSDHCPITLYLAL.

Positions 1-33 (MPKRGKKGAVAEDGDELRTEPEAKKSKTAAKKN) are necessary for interaction with YBX1, binding to RNA, association together with NPM1 to rRNA, endoribonuclease activity on abasic RNA and localization in the nucleoli. The segment at 1–60 (MPKRGKKGAVAEDGDELRTEPEAKKSKTAAKKNDKEAAGEGPALYEDPPDQKTSPSGKPA) is disordered. Residues Lys6 and Lys7 each carry the N6-acetyllysine; by EP300 modification. The Nuclear localization signal (NLS) motif lies at 8-13 (GAVAED). Residues 16 to 38 (ELRTEPEAKKSKTAAKKNDKEAA) are compositionally biased toward basic and acidic residues. Residues 23–33 (AKKSKTAAKKN) form a necessary for interaction with NPM1 and for efficient rRNA binding region. N6-acetyllysine is present on residues Lys27, Lys31, Lys32, and Lys35. Residue Ser54 is modified to Phosphoserine. The Nuclear export signal (NES) signature appears at 64–80 (ICSWNVDGLRAWIKKKG). At Cys65 the chain carries S-nitrosocysteine; alternate. Residues Cys65 and Cys93 are joined by a disulfide bond. Residue Asp70 participates in Mg(2+) binding. Position 93 is an S-nitrosocysteine; alternate (Cys93). Glu96 contacts Mg(2+). Residue Tyr171 is part of the active site. Lys197 carries the post-translational modification N6-acetyllysine. Mg(2+)-binding residues include Asp210 and Asn212. Asp210 functions as the Proton donor/acceptor in the catalytic mechanism. The residue at position 233 (Thr233) is a Phosphothreonine; by CDK5. Residues 289 to 318 (HSLLPALCDSKIRSKALGSDHCPITLYLAL) form a mitochondrial targeting sequence (MTS) region. Asp308 contributes to the Mg(2+) binding site. Cys310 bears the S-nitrosocysteine mark.

It belongs to the DNA repair enzymes AP/ExoA family. As to quaternary structure, monomer. Homodimer; disulfide-linked. Component of the SET complex, composed of at least APEX1, SET, ANP32A, HMGB2, NME1 and TREX1. Associates with the dimer XRCC5/XRCC6 in a DNA-dependent manner. Interacts with SIRT1; the interaction is increased in the context of genotoxic stress. Interacts with HDAC1, HDAC2 and HDAC3; the interactions are not dependent on the APEX1 acetylation status. Interacts with XRCC1; the interaction is induced by SIRT1 and increased with the APEX1 acetylated form. Interacts with NPM1 (via N-terminal domain); the interaction is RNA-dependent and decreases in hydrogen peroxide-damaged cells. Interacts (via N-terminus) with YBX1 (via C-terminus); the interaction is increased in presence of APEX1 acetylated at Lys-6 and Lys-7. Interacts with HNRNPL; the interaction is DNA-dependent. Interacts (via N-terminus) with KPNA1 and KPNA2. Interacts with TXN; the interaction stimulates the FOS/JUN AP-1 complex DNA-binding activity in a redox-dependent manner. Interacts with GZMA, KRT8, MDM2, POLB, PRDX6, PRPF19, RPLP0, TOMM20 and WDR77. Binds to CDK5. Mg(2+) serves as cofactor. It depends on Mn(2+) as a cofactor. In terms of processing, phosphorylated. Phosphorylation by kinase PKC or casein kinase CK2 results in enhanced redox activity that stimulates binding of the FOS/JUN AP-1 complex to its cognate binding site. AP-endodeoxyribonuclease activity is not affected by CK2-mediated phosphorylation. Phosphorylation of Thr-233 by CDK5 in response to MPP(+)/MPTP (1-methyl-4-phenylpyridinium) reduces AP-endodeoxyribonuclease activity resulting in accumulation of DNA damage and contributing to neuronal death. Acetylated on Lys-6 and Lys-7. Acetylation is increased by the transcriptional coactivator EP300 acetyltransferase, genotoxic agents like H(2)O(2) and methyl methanesulfonate (MMS). Acetylation increases its binding affinity to the negative calcium response element (nCaRE) DNA promoter. The acetylated form induces a stronger binding of YBX1 to the Y-box sequence in the MDR1 promoter than the unacetylated form. Deacetylated on lysines. Lys-6 and Lys-7 are deacetylated by SIRT1. Post-translationally, cleaved at Lys-31 by granzyme A to create the mitochondrial form; leading in reduction of binding to DNA, AP endodeoxyribonuclease activity, redox activation of transcription factors and to enhanced cell death. Cleaved by granzyme K; leading to intracellular ROS accumulation and enhanced cell death after oxidative stress. In terms of processing, cys-69 and Cys-93 are nitrosylated in response to nitric oxide (NO) and lead to the exposure of the nuclear export signal (NES). Ubiquitinated by MDM2; leading to translocation to the cytoplasm and proteasomal degradation.

It localises to the nucleus. Its subcellular location is the nucleolus. The protein localises to the nucleus speckle. The protein resides in the endoplasmic reticulum. It is found in the cytoplasm. It localises to the mitochondrion. The catalysed reaction is a deoxyribonucleotide-2'-deoxyribose-5'-monophosphate-DNA + H2O = a 5'-end 2'-deoxyribose-5'-monophosphate-DNA + a 3'-end 2'-deoxyribonucleotide-DNA + H(+). It carries out the reaction Exonucleolytic cleavage in the 3'- to 5'-direction to yield nucleoside 5'-phosphates.. The enzyme catalyses a 3'-end 2'-deoxyribonucleotide-3'-phosphoglycolate-DNA + H2O = 2-phosphoglycolate + a 3'-end 2'-deoxyribonucleotide-DNA + H(+). It catalyses the reaction a 3'-end 2'-deoxyribonucleotide-8-oxoguanine-DNA + H2O = 8-oxo-dGMP + a 3'-end 2'-deoxyribonucleotide-DNA + H(+). NPM1 stimulates endodeoxyribonuclease activity on double-stranded DNA with AP sites, but inhibits endoribonuclease activity on single-stranded RNA containing AP sites. Its function is as follows. Multifunctional protein that plays a central role in the cellular response to oxidative stress. The two major activities of APEX1 are DNA repair and redox regulation of transcriptional factors. Functions as an apurinic/apyrimidinic (AP) endodeoxyribonuclease in the base excision repair (BER) pathway of DNA lesions induced by oxidative and alkylating agents. Initiates repair of AP sites in DNA by catalyzing hydrolytic incision of the phosphodiester backbone immediately adjacent to the damage, generating a single-strand break with 5'-deoxyribose phosphate and 3'-hydroxyl ends. Also incises at AP sites in the DNA strand of DNA/RNA hybrids, single-stranded DNA regions of R-loop structures, and single-stranded RNA molecules. Operates at switch sites of immunoglobulin (Ig) constant regions where it mediates Ig isotype class switch recombination. Processes AP sites induced by successive action of AICDA and UNG. Generates staggered nicks in opposite DNA strands resulting in the formation of double-strand DNA breaks that are finally resolved via non-homologous end joining repair pathway. Has 3'-5' exodeoxyribonuclease activity on mismatched deoxyribonucleotides at the 3' termini of nicked or gapped DNA molecules during short-patch BER. Possesses DNA 3' phosphodiesterase activity capable of removing lesions (such as phosphoglycolate and 8-oxoguanine) blocking the 3' side of DNA strand breaks. Also acts as an endoribonuclease involved in the control of single-stranded RNA metabolism. Plays a role in regulating MYC mRNA turnover by preferentially cleaving in between UA and CA dinucleotides of the MYC coding region determinant (CRD). In association with NMD1, plays a role in the rRNA quality control process during cell cycle progression. Acts as a loading factor for POLB onto non-incised AP sites in DNA and stimulates the 5'-terminal deoxyribose 5'-phosphate (dRp) excision activity of POLB. Exerts reversible nuclear redox activity to regulate DNA binding affinity and transcriptional activity of transcriptional factors by controlling the redox status of their DNA-binding domain, such as the FOS/JUN AP-1 complex after exposure to IR. Involved in calcium-dependent down-regulation of parathyroid hormone (PTH) expression by binding to negative calcium response elements (nCaREs). Together with HNRNPL or the dimer XRCC5/XRCC6, associates with nCaRE, acting as an activator of transcriptional repression. May also play a role in the epigenetic regulation of gene expression by participating in DNA demethylation. Stimulates the YBX1-mediated MDR1 promoter activity, when acetylated at Lys-6 and Lys-7, leading to drug resistance. Plays a role in protection from granzyme-mediated cellular repair leading to cell death. Binds DNA and RNA. Associates, together with YBX1, on the MDR1 promoter. Together with NPM1, associates with rRNA. The protein is DNA repair nuclease/redox regulator APEX1 (APEX1) of Pan paniscus (Pygmy chimpanzee).